A 1663-amino-acid polypeptide reads, in one-letter code: Cortactin-binding protein 2 (1663 aa).

Disordered stretches follow at residues 1-23 (MATD…AGAA), 203-222 (KKKT…RSTE), 358-440 (RQAS…LHPG), 454-479 (GNAN…PTSR), and 498-616 (RFTS…PKPS). Residues 119-276 (KKMQERMSAQ…EQLKRGSDSK (158 aa)) adopt a coiled-coil conformation. A compositionally biased stretch (low complexity) spans 386–396 (PSTDSTPDPTS). Residues 411–422 (QTPGIAPQNSQA) are compositionally biased toward polar residues. Position 498 is an asymmetric dimethylarginine (Arg498). Residues 583-597 (TVASPPSSLPQGNRV) show a composition bias toward polar residues. 6 ANK repeats span residues 709–739 (GRPT…DINY), 743–772 (DGHS…QINA), 776–805 (NGFT…NINH), 809–838 (GGQT…NRSV), 842–871 (DGWT…PACG), and 912–942 (EGWT…EPER). Positions 1447–1477 (KKKGESGAWRKVNTSPRRKSGRFSLPTWNKP) are disordered. Residue Ser1524 is modified to Phosphoserine. Disordered stretches follow at residues 1581–1602 (QKEV…KSKT) and 1618–1663 (SKVT…KHNK). Positions 1582–1599 (KEVSPLSSHQTTECSNSK) are enriched in polar residues. Positions 1624–1638 (SQNTKRSSSSSNTRQ) are enriched in low complexity. The span at 1645–1663 (SKEENWNLHKNEHLDKHNK) shows a compositional bias: basic and acidic residues.

As to quaternary structure, interacts with CTTN/cortactin SH3 domain. Interacts with STRN, STRN4/zinedin and MOB4/phocein; this interactions mediate the association with the STRIPAK core complex and may regulate dendritic spine distribution of the STRIPAK complex in hippocampal neurons. Activation of glutamate receptors weakens the interaction with STRN and STRN4.

It is found in the cytoplasm. The protein localises to the cell cortex. It localises to the cell projection. Its subcellular location is the dendritic spine. Functionally, regulates the dendritic spine distribution of CTTN/cortactin in hippocampal neurons, and thus controls dendritic spinogenesis and dendritic spine maintenance. Associates with the striatin-interacting phosphatase and kinase (STRIPAK) core complex to regulate dendritic spine distribution of the STRIPAK complex in hippocampal neurons. In Papio anubis (Olive baboon), this protein is Cortactin-binding protein 2 (CTTNBP2).